A 260-amino-acid polypeptide reads, in one-letter code: Ribose-5-phosphate isomerase A (260 aa).

Substrate-binding positions include 33–36 (TGST), 89–92 (DGAD), and 102–105 (KGGG). Residue E111 is the Proton acceptor of the active site. K129 lines the substrate pocket.

Belongs to the ribose 5-phosphate isomerase family. In terms of assembly, homodimer.

It catalyses the reaction aldehydo-D-ribose 5-phosphate = D-ribulose 5-phosphate. It functions in the pathway carbohydrate degradation; pentose phosphate pathway; D-ribose 5-phosphate from D-ribulose 5-phosphate (non-oxidative stage): step 1/1. In terms of biological role, catalyzes the reversible conversion of ribose-5-phosphate to ribulose 5-phosphate. This Dinoroseobacter shibae (strain DSM 16493 / NCIMB 14021 / DFL 12) protein is Ribose-5-phosphate isomerase A.